The primary structure comprises 299 residues: ATP phosphoribosyltransferase (299 aa).

It belongs to the ATP phosphoribosyltransferase family. Long subfamily. As to quaternary structure, equilibrium between an active dimeric form, an inactive hexameric form and higher aggregates. Interconversion between the various forms is largely reversible and is influenced by the natural substrates and inhibitors of the enzyme. The cofactor is Mg(2+).

It localises to the cytoplasm. The catalysed reaction is 1-(5-phospho-beta-D-ribosyl)-ATP + diphosphate = 5-phospho-alpha-D-ribose 1-diphosphate + ATP. The protein operates within amino-acid biosynthesis; L-histidine biosynthesis; L-histidine from 5-phospho-alpha-D-ribose 1-diphosphate: step 1/9. With respect to regulation, feedback inhibited by histidine. Functionally, catalyzes the condensation of ATP and 5-phosphoribose 1-diphosphate to form N'-(5'-phosphoribosyl)-ATP (PR-ATP). Has a crucial role in the pathway because the rate of histidine biosynthesis seems to be controlled primarily by regulation of HisG enzymatic activity. The chain is ATP phosphoribosyltransferase from Shigella flexneri serotype 5b (strain 8401).